The chain runs to 229 residues: LexA repressor (229 aa).

Positions 26–46 (FDEMKEALDLASKSGIHRLIT) form a DNA-binding region, H-T-H motif. Active-site for autocatalytic cleavage activity residues include Ser149 and Lys187.

The protein belongs to the peptidase S24 family. Homodimer.

It catalyses the reaction Hydrolysis of Ala-|-Gly bond in repressor LexA.. In terms of biological role, represses a number of genes involved in the response to DNA damage (SOS response), including recA and lexA. In the presence of single-stranded DNA, RecA interacts with LexA causing an autocatalytic cleavage which disrupts the DNA-binding part of LexA, leading to derepression of the SOS regulon and eventually DNA repair. This Phenylobacterium zucineum (strain HLK1) protein is LexA repressor.